Here is a 201-residue protein sequence, read N- to C-terminus: Alanine--tRNA ligase (201 aa).

Belongs to the class-II aminoacyl-tRNA synthetase family. It depends on Zn(2+) as a cofactor.

It is found in the cytoplasm. It carries out the reaction tRNA(Ala) + L-alanine + ATP = L-alanyl-tRNA(Ala) + AMP + diphosphate. In terms of biological role, catalyzes the attachment of alanine to tRNA(Ala) in a two-step reaction: alanine is first activated by ATP to form Ala-AMP and then transferred to the acceptor end of tRNA(Ala). Also edits incorrectly charged Ser-tRNA(Ala) and Gly-tRNA(Ala) via its editing domain. This is Alanine--tRNA ligase (alaS) from Rhizobium leguminosarum bv. viciae.